A 2235-amino-acid polypeptide reads, in one-letter code: MQRYHAANCTSAVNNSAIGGASARDSGRADSSSIGNYSLNSRRPPPLTPYKLKCEKDGLNSRLGPPDFHPPTSNSPEENLTKEYVQFGYKETVDGLKESEEIILSQVHTFSKPVVHKCKEAVRKCLRAINESRALKRKAGQVYGVPLSGSLLCKPGFPEQRSCGEETKKRWIESLSQQHKRLRSLADNIPGYRRKTLFEVLIRNNVPLLRATWFIKVTYLNQVRPSPAAISSGTPDKTQASRCEQWTKDVIEYLQYLLDELLSRNSSFPAQQTRDRSPQMLYTGSMQKNSPASTSLYGEETSLHFKWWYMVRLLQWHHAEGLLFPNLIVDWVLKLLQEKEIFEILQLLLPIVYGVLESIVLSQTYVQSLVAIAVRFIQEPAPGGSDLVDNSRRAYTLSALIEMVRYLVLAAPDTFVASDFFPLPPSVAACGPNDVSYTSKAYENLEKLRSNSAEISAQFQGRGVLSRFEFLSFDYTISTIQRSADDLAKIASAGYPQHNVAKAVQALDKALSDGDIRAAYSYLFEDLCNGAVDEAWITDVSPCLRSSLRWIGAISTSFVCSVFFLIEWATCDFRDFRAGVPKDIKFSGRKDCSQVYLVIQLLKQKILGGEFTARKGKNCRNNFLGVSKPSGSMDAFESPGPLHDIIVCWIDQHEVHKGGAKRLQLLVFELIRSGIFNPIAYVRQLIVSGMIDVIQPAVDPERRMRHHRILKQLPGCFVHETLEEAQLFGGDKLSEAVRTYSNERRLLLRELLVEKGKYWNNLVLSDQKSKKISTSLSSVIFPRACNAKSNSKGPRKHTKSSVDIRELKERISALLQFPGMSCGVETPVRDEFQNSVKRSSGSVYSKMDQPEATPGCEDCRRAKRPKMNDEKSSCYQGNSPIASDEEDNWWIKKGSKTVESSLKVDPQIEITKQVPRGRQKMARKTQSLAQLQAARIEGSQGASTSHVCDNKVSCPHHGPGVEGENQKVVDVFRTSTPVDMVSVGNSLKQLQFVDKRSIAVWLTTAVRQLVEEPQKSSVRVGQFNRGAPVEEKNTIRWKLGADELYSILFLLDISLDLVSAVKFLLWLLPKANSTPSFAVQGGRNLVTVPRNVENNMCEIGEAILVSSLRRYENILLSADLVPEAMTALMNRAASLMSSNGKISGSAALVYTRYILKRYGSLPSVVEWHNNFKATSEKKLLSELDHTRSGNGEYGNPLGVPAGVDNPDDYLRKKISIGGARPSRVGLSMRDVLQRHVEEATHYLKKLIGTGTMKASLAEKNDDGYQVAQQIVVGLMDCIRQTGGAAQEGDPSLVSSAVSAIINSVGLSVARITDFSLGNIYQNHPSGVDSSNIARYILRIHITCLCLLKEALGERQSRVFEIALATESSTALTGVFAPVKGSRGQHQLSPESYDSNANNSTIDMSNGTGKMALSRATKITAAVSALVIGSITHGVITLERIVGLLRLKDYLDFVQFVRRTKSSSNGSARSMGASKVESPIEVYVHWFRLLVGNCKTVSEGLVLELVGESSVVAISRMQRMLPLKLVFPPAYSIIAFVLWRPFVSNSNSNSSVHEDTHRLYQSLTMAFHDVIKHLPFRDVCFRDTQGLYELIVADSTDAEFASVFESHGLDMHLKSVAFAPLRARLFLNSLIDCKVPSSGYSHEGVSEAKNRHQGNGTKLVDKLVSVLDCLQPAKFHWQWVELRLLLNEQALAEKLENHDMPLTDAIRSSCPTSEKPDASENEKNFIQILLTRLLVRPDAVPLFSEVVHLFGRSVEDSMLKQAEWFLAGQDVLFGRKTIRQKLIIVGESKGLPTKPQFWKPWGWCNSSSSDHITANKAGKKRKFEITSIEEGEVIEEGSGSRKVLLPRVLDENSPSVGYGITTERAFVQLVLPCIDQSSDESRSTFVNELVRQFSNIEQQLSSVTNRSTTSNKQMGTASSGSEISSNKGSTRKGLRGGSPSLARRSSANTTDTSPPPSPAALRASMSLRLQFLLRLLPVICGEPSFKNTRHALASTIVRLLGSRVVYEDYAVCSPRSELSKAETESTIDPSSMADLSSEVLFDRLLFVLHGLLSNHQPKWLKPRPSSNESSKDFTLFDRDAAESLQNELSRMQLPDTIRWRIQAAMPILLPSLRCSLSCQPHSVPPTALTLVQPSGSTAAAGTNQRNSPAISKSGTAAAQGKLKPTMLAPHQQQEADNTDVVDPWTLLEDGTSSGLSSSNASNSSDMANLRATCWLKGAVRVRRTDLTYVGSVDDDS.

The segment covering 16–35 (SAIGGASARDSGRADSSSIG) has biased composition (low complexity). Disordered regions lie at residues 16–80 (SAIG…EENL), 268–293 (FPAQ…SPAS), 835–858 (SVKR…GCED), 1900–1959 (SSVT…SPAA), 2134–2160 (GSTA…AQGK), and 2183–2202 (WTLL…ASNS). Over residues 280-293 (MLYTGSMQKNSPAS) the composition is skewed to polar residues. The span at 1900–1916 (SSVTNRSTTSNKQMGTA) shows a compositional bias: polar residues. Residues 1917–1927 (SSGSEISSNKG) show a composition bias toward low complexity. Over residues 2134 to 2155 (GSTAAAGTNQRNSPAISKSGTA) the composition is skewed to polar residues. A compositionally biased stretch (low complexity) spans 2191-2202 (SSGLSSSNASNS).

This sequence belongs to the Mediator complex subunit 12 family. Component of the Mediator complex. Ubiquitous. Higher expression in vascular tissue, shoot apex and developing floral organs.

It is found in the nucleus. In terms of biological role, component of the Mediator complex, a coactivator involved in the regulated transcription of nearly all RNA polymerase II-dependent genes. Mediator functions as a bridge to convey information from gene-specific regulatory proteins to the basal RNA polymerase II transcription machinery. The Mediator complex, having a compact conformation in its free form, is recruited to promoters by direct interactions with regulatory proteins and serves for the assembly of a functional preinitiation complex with RNA polymerase II and the general transcription factors. Flowering regulator which suppresses FLC expression, promotes FT and TSF expression and up-regulates SOC1 and FUL mainly in an FT-dependent manner under long-day conditions. Involved in diverse developmental aspects through gene regulation and modulation of the auxin response. Acts closely together with MAB13. Involved in the regulation of embryo patterning and cotyledon organogenesis by transiently repressing a transcriptional program that interferes with this process. This chain is Mediator of RNA polymerase II transcription subunit 12 (MED12), found in Arabidopsis thaliana (Mouse-ear cress).